Reading from the N-terminus, the 625-residue chain is 1-deoxy-D-xylulose-5-phosphate synthase (625 aa).

Thiamine diphosphate contacts are provided by residues His80 and 121-123 (GHS). Residue Asp152 coordinates Mg(2+). Residues 153–154 (GA), Asn181, Tyr290, and Glu371 each bind thiamine diphosphate. Asn181 provides a ligand contact to Mg(2+).

The protein belongs to the transketolase family. DXPS subfamily. As to quaternary structure, homodimer. Mg(2+) is required as a cofactor. It depends on thiamine diphosphate as a cofactor.

It catalyses the reaction D-glyceraldehyde 3-phosphate + pyruvate + H(+) = 1-deoxy-D-xylulose 5-phosphate + CO2. It functions in the pathway metabolic intermediate biosynthesis; 1-deoxy-D-xylulose 5-phosphate biosynthesis; 1-deoxy-D-xylulose 5-phosphate from D-glyceraldehyde 3-phosphate and pyruvate: step 1/1. Its function is as follows. Catalyzes the acyloin condensation reaction between C atoms 2 and 3 of pyruvate and glyceraldehyde 3-phosphate to yield 1-deoxy-D-xylulose-5-phosphate (DXP). The polypeptide is 1-deoxy-D-xylulose-5-phosphate synthase (Haemophilus influenzae (strain 86-028NP)).